Here is a 1292-residue protein sequence, read N- to C-terminus: Myosin-1 (1292 aa).

Positions 35–714 (VGVSDLTLLS…TLFALENMRD (680 aa)) constitute a Myosin motor domain. Residue 128-135 (GESGAGKT) participates in ATP binding. At S356 the chain carries Phosphoserine. The actin-binding stretch occupies residues 403–485 (SIGILDIYGF…PGIFAALNDS (83 aa)). IQ domains are found at residues 718-738 (HNMASRIQRAWRRFLQRRIDS) and 739-764 (AIRIQRAIREMKHGNQFEQLRDYGNK). One can recognise a TH1 domain in the interval 770–960 (KERRAMSLLG…TIMVRRGRPG (191 aa)). Disordered regions lie at residues 956–991 (RGRPGNCSQRKKPLSTRLPDTYTTRETGYKNAGHPT), 1017–1180 (YSLN…FPLK), and 1227–1258 (PVASSAPLGNSGVATREAGTTSAATAAASAAT). Positions 1062–1081 (MDNSSAAYGNASALPNSAPS) are enriched in polar residues. Composition is skewed to pro residues over residues 1087–1121 (ASRPVPKPAPRPGPKPGPKPGPKPGPKPAPKPMPR) and 1142–1155 (APPPPPPPPPPPAA). In terms of domain architecture, SH3 spans 1157-1219 (PSEPVYEAAF…PTAYIVESKA (63 aa)). Residues 1240 to 1258 (ATREAGTTSAATAAASAAT) are compositionally biased toward low complexity.

It belongs to the TRAFAC class myosin-kinesin ATPase superfamily. Myosin family. Phosphorylation of the TEDS site (Ser-356) is required for the polarization of the actin cytoskeleton. Phosphorylation probably activates the myosin-I ATPase activity.

The protein resides in the cytoplasm. The protein localises to the cytoskeleton. It is found in the actin patch. In terms of biological role, type-I myosin implicated in the organization of the actin cytoskeleton. Required for proper actin cytoskeleton polarization. At the cell cortex, assembles in patch-like structures together with proteins from the actin-polymerizing machinery and promotes actin assembly. Functions as actin nucleation-promoting factor (NPF) for the Arp2/3 complex. In Eremothecium gossypii (strain ATCC 10895 / CBS 109.51 / FGSC 9923 / NRRL Y-1056) (Yeast), this protein is Myosin-1 (MYO1).